The primary structure comprises 381 residues: Endophilin-A homolog (381 aa).

Residues 1 to 21 (MSLSGLRKQFNKANQYLSETM) are membrane-binding amphipathic helix. A BAR domain is found at 18–247 (SETMGAAEPT…LGHRIKDAAA (230 aa)). A coiled-coil region spans residues 170–238 (CKKRQQRRDD…QCLENLQQQL (69 aa)). The segment at 246-323 (AARPREEHVP…PPPLSQQQKP (78 aa)) is disordered. Positions 260 to 271 (ANESRTPRSSFR) are enriched in polar residues. A compositionally biased stretch (pro residues) spans 305–317 (YQGPPPGGLPPPL). The SH3 domain maps to 320–379 (QQKPQCRALFDFDAQSEGELDFKEGTLIELVSQIDENWYEGRVNGKTGLFPVTYVQVLVP).

Belongs to the endophilin family. May form a homodimer (via the BAR domain). As to expression, expressed in neurons and posterior intestine.

It is found in the synapse. Its subcellular location is the cytoplasmic vesicle. The protein resides in the secretory vesicle. It localises to the synaptic vesicle. The protein localises to the membrane. Involved in synaptic vesicle (SV) recycling in neurons probably by regulating clathrin-mediated endocytosis. By controlling SV endocytosis, regulates the rate of excitatory postsynaptic currents (EPSCs) at neuromuscular junctions and thus locomotion. In a similar manner, involved in necrotic neuronal cell death induced by abnormal hyperactivation of ion channels. Plays a minor role in responses to mechanical stimuli. Plays a minor role in unc-26/synaptojanin localization to synapses. This is Endophilin-A homolog from Caenorhabditis elegans.